A 397-amino-acid chain; its full sequence is S-layer protein B (397 aa).

Positions 1 to 24 are cleaved as a signal peptide; sequence MVVKKTFVLSTLILISVVALVSTA. The stretch at 259 to 314 forms a coiled coil; sequence INALNNEVSTLRSEISSLNSTIASLNKSLANANTQISNLQSEITTLNSEIGKLNST. Residues 373–393 traverse the membrane as a helical segment; sequence GGIIAGIIGLIVAIVAIVLVM.

It belongs to the Sulfolobales SlaB family. In terms of assembly, the mushroom-shaped unit cells of the Sulfolobales' S-layers may consist of three SlaB subunits and six SlaA subunits.

It localises to the secreted. Its subcellular location is the cell wall. The protein resides in the S-layer. The protein localises to the cell membrane. In terms of biological role, S-layer small protein. May anchor the complex to the cell membrane. In Saccharolobus solfataricus (strain ATCC 35092 / DSM 1617 / JCM 11322 / P2) (Sulfolobus solfataricus), this protein is S-layer protein B.